The primary structure comprises 572 residues: Proline--tRNA ligase (572 aa).

The protein belongs to the class-II aminoacyl-tRNA synthetase family. ProS type 1 subfamily. In terms of assembly, homodimer.

It localises to the cytoplasm. It carries out the reaction tRNA(Pro) + L-proline + ATP = L-prolyl-tRNA(Pro) + AMP + diphosphate. Catalyzes the attachment of proline to tRNA(Pro) in a two-step reaction: proline is first activated by ATP to form Pro-AMP and then transferred to the acceptor end of tRNA(Pro). As ProRS can inadvertently accommodate and process non-cognate amino acids such as alanine and cysteine, to avoid such errors it has two additional distinct editing activities against alanine. One activity is designated as 'pretransfer' editing and involves the tRNA(Pro)-independent hydrolysis of activated Ala-AMP. The other activity is designated 'posttransfer' editing and involves deacylation of mischarged Ala-tRNA(Pro). The misacylated Cys-tRNA(Pro) is not edited by ProRS. This chain is Proline--tRNA ligase, found in Escherichia coli O17:K52:H18 (strain UMN026 / ExPEC).